The chain runs to 295 residues: uncharacterized protein (295 aa).

The protein belongs to the ROK (NagC/XylR) family.

This is an uncharacterized protein from Clostridium perfringens (strain 13 / Type A).